A 126-amino-acid chain; its full sequence is C-type natriuretic peptide (126 aa).

Positions 1-23 are cleaved as a signal peptide; it reads MHLSQLLACALLLALLSLRPSEA. Residues 20 to 71 form a disordered region; sequence PSEAKPGAPPKVPRTPSGEEVAEPQAAGGGQKKGDKTPGGGGANLKDDRSRL. The propeptide occupies 24-73; that stretch reads KPGAPPKVPRTPSGEEVAEPQAAGGGQKKGDKTPGGGGANLKDDRSRLLR. Residues 46–62 show a composition bias toward gly residues; sequence AGGGQKKGDKTPGGGGA. Cys-110 and Cys-126 are oxidised to a cystine.

The protein belongs to the natriuretic peptide family. Degraded by IDE (in vitro).

It localises to the secreted. Its function is as follows. Hormone which plays a role in endochondral ossification through regulation of cartilaginous growth plate chondrocytes proliferation and differentiation. May also be vasoactive and natriuretic. Acts by specifically binding and stimulating NPR2 to produce cGMP. Binds the clearance receptor NPR3. The polypeptide is C-type natriuretic peptide (NPPC) (Bos taurus (Bovine)).